A 92-amino-acid polypeptide reads, in one-letter code: Small ribosomal subunit protein uS19 (92 aa).

Belongs to the universal ribosomal protein uS19 family.

Functionally, protein S19 forms a complex with S13 that binds strongly to the 16S ribosomal RNA. The polypeptide is Small ribosomal subunit protein uS19 (Rickettsia felis (strain ATCC VR-1525 / URRWXCal2) (Rickettsia azadi)).